A 973-amino-acid polypeptide reads, in one-letter code: Translation initiation factor IF-2 (973 aa).

A disordered region spans residues P52–E388. 8 stretches are compositionally biased toward basic and acidic residues: residues E83–K120, V128–R148, Q157–R172, V186–F202, P210–A246, R272–P288, L314–K333, and K343–R360. The segment covering A374–P386 has biased composition (low complexity). One can recognise a tr-type G domain in the interval D472–K641. Positions G481–T488 are G1. GTP is bound at residue G481–T488. Positions G506–H510 are G2. Residues D527–G530 form a G3 region. Residues D527–H531 and N581–D584 each bind GTP. The interval N581–D584 is G4. The tract at residues S617–L619 is G5.

Belongs to the TRAFAC class translation factor GTPase superfamily. Classic translation factor GTPase family. IF-2 subfamily.

The protein localises to the cytoplasm. Functionally, one of the essential components for the initiation of protein synthesis. Protects formylmethionyl-tRNA from spontaneous hydrolysis and promotes its binding to the 30S ribosomal subunits. Also involved in the hydrolysis of GTP during the formation of the 70S ribosomal complex. This is Translation initiation factor IF-2 from Pelotomaculum thermopropionicum (strain DSM 13744 / JCM 10971 / SI).